The following is a 380-amino-acid chain: Hydrogenase maturation factor HypD1 (380 aa).

The Fe cation site is built by Cys-36, Cys-64, and Cys-67.

It belongs to the HypD family. [4Fe-4S] cluster is required as a cofactor.

It participates in protein modification; [NiFe] hydrogenase maturation. In terms of biological role, involved in the maturation of [NiFe] hydrogenases. Involved in the biosynthesis of the Fe(CN)(2)CO cofactor. The chain is Hydrogenase maturation factor HypD1 (hypD1) from Bradyrhizobium diazoefficiens (strain JCM 10833 / BCRC 13528 / IAM 13628 / NBRC 14792 / USDA 110).